The chain runs to 142 residues: Translation initiation factor 2 subunit beta (142 aa).

Belongs to the eIF-2-beta/eIF-5 family. In terms of assembly, heterotrimer composed of an alpha, a beta and a gamma chain.

EIF-2 functions in the early steps of protein synthesis by forming a ternary complex with GTP and initiator tRNA. In Thermococcus gammatolerans (strain DSM 15229 / JCM 11827 / EJ3), this protein is Translation initiation factor 2 subunit beta.